The sequence spans 449 residues: 23S rRNA (uracil(1939)-C(5))-methyltransferase RlmD (449 aa).

Residues 12 to 70 enclose the TRAM domain; sequence SKQLSAKQSFSVHQLDHLGAGIAQHQGKVVFIPGALPSETVQAQLTEQKKNYARAKLIK. [4Fe-4S] cluster is bound by residues Cys-83, Cys-89, Cys-92, and Cys-170. The S-adenosyl-L-methionine site is built by Gln-282, Phe-311, Asn-316, Glu-332, Asp-359, and Asp-379. Cys-405 serves as the catalytic Nucleophile.

It belongs to the class I-like SAM-binding methyltransferase superfamily. RNA M5U methyltransferase family. RlmD subfamily.

It carries out the reaction uridine(1939) in 23S rRNA + S-adenosyl-L-methionine = 5-methyluridine(1939) in 23S rRNA + S-adenosyl-L-homocysteine + H(+). In terms of biological role, catalyzes the formation of 5-methyl-uridine at position 1939 (m5U1939) in 23S rRNA. The sequence is that of 23S rRNA (uracil(1939)-C(5))-methyltransferase RlmD from Shewanella sp. (strain MR-7).